Consider the following 270-residue polypeptide: Orotidine 5'-phosphate decarboxylase (270 aa).

Substrate-binding positions include aspartate 39, 61–63 (KTH), 93–102 (DRKFADIGNT), tyrosine 221, and arginine 239. Residue lysine 95 is the Proton donor of the active site.

The protein belongs to the OMP decarboxylase family.

The catalysed reaction is orotidine 5'-phosphate + H(+) = UMP + CO2. It participates in pyrimidine metabolism; UMP biosynthesis via de novo pathway; UMP from orotate: step 2/2. This chain is Orotidine 5'-phosphate decarboxylase (URA3), found in Candida albicans (strain SC5314 / ATCC MYA-2876) (Yeast).